The primary structure comprises 187 residues: Large ribosomal subunit protein uL22 (187 aa).

Basic and acidic residues predominate over residues Val-159–Lys-171. The disordered stretch occupies residues Val-159–Phe-187. Over residues Lys-172–Phe-187 the composition is skewed to basic residues.

It belongs to the universal ribosomal protein uL22 family.

This chain is Large ribosomal subunit protein uL22 (rpl-17), found in Caenorhabditis elegans.